Reading from the N-terminus, the 71-residue chain is uncharacterized protein (71 aa).

The chain crosses the membrane as a helical span at residues 12-32 (FLVSIAFFGLAPTIPLLAIAL).

It localises to the membrane. This is an uncharacterized protein from Sinorhizobium fredii (strain NBRC 101917 / NGR234).